The primary structure comprises 668 residues: CLK4-associating serine/arginine rich protein (668 aa).

Serine 101 is modified (phosphoserine). Disordered stretches follow at residues 173-232 and 252-668; these read AEVE…GMAD and AKAL…HYRH. Residues 182-214 show a composition bias toward acidic residues; the sequence is PEEEESPAEEESNSDEDEVIPDIDVEVDVDELN. Basic residues predominate over residues 265 to 283; sequence RRSRRQRREFREKRLRGRK. A phosphoserine mark is found at serine 285 and serine 294. Residues 290-313 show a composition bias toward basic and acidic residues; the sequence is ARRDSPTYDPYKRSPSESSSESRS. Position 327 is a phosphothreonine (threonine 327). Serine 331 and serine 335 each carry phosphoserine. Composition is skewed to low complexity over residues 340–353 and 378–395; these read AAAA…GAAP and SSSS…SRSS. The segment covering 396–435 has biased composition (basic residues); it reads SRSRRGYYRSGRHARSRSRSWSRSRSRSRRYSRSRSRGRR. Basic and acidic residues predominate over residues 436-446; sequence HSDGGSRDGHR. The segment covering 475–486 has biased composition (basic residues); sequence RGARGPRHHSSS. 2 stretches are compositionally biased toward low complexity: residues 487-510 and 518-527; these read HSRS…SRSQ and QSHSQSQSHS. At serine 541 the chain carries Phosphoserine. Threonine 567 is modified (phosphothreonine). Positions 579–641 form a coiled coil; it reads ALNRQFKADK…ERQYSRQSRS (63 aa). Basic and acidic residues-rich tracts occupy residues 584–611 and 619–635; these read FKAD…ELRA and KERE…ERQY. Residues 636–645 show a composition bias toward low complexity; sequence SRQSRSPSPR. Over residues 653 to 668 the composition is skewed to basic residues; that stretch reads SRRRSRSRSRSPHYRH.

Belongs to the splicing factor SR family. In terms of assembly, probably interacts with CLK4. In terms of processing, phosphorylated in vitro by CLK4. As to expression, highly expressed in brain. Expressed at intermediate level in lung and liver. In brain, it is expressed in the hippocampus, cerebellum and olfactory bulb.

It is found in the nucleus. It localises to the nucleoplasm. Functionally, probably functions as an alternative splicing regulator. May regulate the mRNA splicing of genes such as CLK1. May act by regulating members of the CLK kinase family. The sequence is that of CLK4-associating serine/arginine rich protein (Clasrp) from Mus musculus (Mouse).